We begin with the raw amino-acid sequence, 418 residues long: Tektin-1 (418 aa).

4 coiled-coil regions span residues 20–107 (NKSQ…SYKE), 134–177 (QELQ…DLRD), 266–308 (NGLK…QQEG), and 332–383 (IAQY…ENTI).

It belongs to the tektin family. In terms of assembly, microtubule inner protein component of sperm flagellar doublet microtubules. Ubiquitinated, leading to its degradation. Deubiquitinated by USP16, promoting its stability.

Its subcellular location is the cytoplasm. It is found in the cytoskeleton. It localises to the cilium axoneme. The protein resides in the flagellum axoneme. In terms of biological role, microtubule inner protein (MIP) part of the dynein-decorated doublet microtubules (DMTs) in cilia and flagellar axoneme. Forms filamentous polymers in the walls of ciliary and flagellar microtubules. This chain is Tektin-1 (Tekt1), found in Mus musculus (Mouse).